The chain runs to 339 residues: Anthranilate phosphoribosyltransferase (339 aa).

5-phospho-alpha-D-ribose 1-diphosphate contacts are provided by residues Gly-79, 82-83, Ser-87, 89-92, 107-115, and Ser-119; these read GD, NIST, and KHGNRSISS. Residue Gly-79 participates in anthranilate binding. Position 91 (Ser-91) interacts with Mg(2+). Asn-110 is an anthranilate binding site. Arg-165 provides a ligand contact to anthranilate. Positions 224 and 225 each coordinate Mg(2+).

It belongs to the anthranilate phosphoribosyltransferase family. Homodimer. The cofactor is Mg(2+).

The enzyme catalyses N-(5-phospho-beta-D-ribosyl)anthranilate + diphosphate = 5-phospho-alpha-D-ribose 1-diphosphate + anthranilate. It participates in amino-acid biosynthesis; L-tryptophan biosynthesis; L-tryptophan from chorismate: step 2/5. In terms of biological role, catalyzes the transfer of the phosphoribosyl group of 5-phosphorylribose-1-pyrophosphate (PRPP) to anthranilate to yield N-(5'-phosphoribosyl)-anthranilate (PRA). The protein is Anthranilate phosphoribosyltransferase of Listeria monocytogenes serotype 4b (strain CLIP80459).